We begin with the raw amino-acid sequence, 166 residues long: Large ribosomal subunit protein uL10 (166 aa).

The protein belongs to the universal ribosomal protein uL10 family. As to quaternary structure, part of the ribosomal stalk of the 50S ribosomal subunit. The N-terminus interacts with L11 and the large rRNA to form the base of the stalk. The C-terminus forms an elongated spine to which L12 dimers bind in a sequential fashion forming a multimeric L10(L12)X complex.

Its function is as follows. Forms part of the ribosomal stalk, playing a central role in the interaction of the ribosome with GTP-bound translation factors. This chain is Large ribosomal subunit protein uL10, found in Shewanella sediminis (strain HAW-EB3).